The following is a 411-amino-acid chain: Gamma-glutamyl phosphate reductase (411 aa).

It belongs to the gamma-glutamyl phosphate reductase family.

The protein resides in the cytoplasm. The catalysed reaction is L-glutamate 5-semialdehyde + phosphate + NADP(+) = L-glutamyl 5-phosphate + NADPH + H(+). Its pathway is amino-acid biosynthesis; L-proline biosynthesis; L-glutamate 5-semialdehyde from L-glutamate: step 2/2. In terms of biological role, catalyzes the NADPH-dependent reduction of L-glutamate 5-phosphate into L-glutamate 5-semialdehyde and phosphate. The product spontaneously undergoes cyclization to form 1-pyrroline-5-carboxylate. The protein is Gamma-glutamyl phosphate reductase of Wolinella succinogenes (strain ATCC 29543 / DSM 1740 / CCUG 13145 / JCM 31913 / LMG 7466 / NCTC 11488 / FDC 602W) (Vibrio succinogenes).